A 278-amino-acid polypeptide reads, in one-letter code: Probable malate dehydrogenase (278 aa).

Positions 51 and 57 each coordinate substrate. NAD(+)-binding positions include Asn64 and 87–89 (VSN). Residues Asn89 and Arg120 each coordinate substrate. His144 serves as the catalytic Proton acceptor.

Belongs to the LDH/MDH superfamily.

The enzyme catalyses (S)-malate + NAD(+) = oxaloacetate + NADH + H(+). Catalyzes the reversible oxidation of malate to oxaloacetate. The chain is Probable malate dehydrogenase (mdh) from Pseudomonas putida (strain ATCC 47054 / DSM 6125 / CFBP 8728 / NCIMB 11950 / KT2440).